Consider the following 313-residue polypeptide: Protoheme IX farnesyltransferase (313 aa).

8 helical membrane-spanning segments follow: residues 23 to 43, 56 to 76, 107 to 127, 128 to 148, 155 to 175, 182 to 202, 243 to 263, and 291 to 311; these read ILAYIALTKPRVIELLLVTTI, PLLILNTLLGGVMAAASANTL, LIFGVVLGVGAFAWLWWTANL, LSGLLAVATIAFYVFVYTLVL, NVVWGGAAGCMPVMIGWSAVT, ALVMFAVIFFWTPPHTWALAM, LALAAGVIYAVVAFLAGVWFL, and YLAVVFCALAVDSVVGWPTLF.

This sequence belongs to the UbiA prenyltransferase family. Protoheme IX farnesyltransferase subfamily.

It localises to the cell membrane. It catalyses the reaction heme b + (2E,6E)-farnesyl diphosphate + H2O = Fe(II)-heme o + diphosphate. It functions in the pathway porphyrin-containing compound metabolism; heme O biosynthesis; heme O from protoheme: step 1/1. Its function is as follows. Converts heme B (protoheme IX) to heme O by substitution of the vinyl group on carbon 2 of heme B porphyrin ring with a hydroxyethyl farnesyl side group. This Mycobacteroides abscessus (strain ATCC 19977 / DSM 44196 / CCUG 20993 / CIP 104536 / JCM 13569 / NCTC 13031 / TMC 1543 / L948) (Mycobacterium abscessus) protein is Protoheme IX farnesyltransferase.